Consider the following 144-residue polypeptide: MKSQWCRPVAMDLGVYQLRHFSISFLSSLLGTENASVRLDNSSSGASVVAIDNKIEQAMDLVKSHLMYAVREEVEVLKEQIKELIEKNSQLEQENNLLKTLASPEQLAQFQAQLQTGSPPATTQPQGTTQPPAQPASQGSGPTA.

The tract at residues 77 to 98 is leucine-zipper; that stretch reads LKEQIKELIEKNSQLEQENNLL. The disordered stretch occupies residues 109–144; that stretch reads QFQAQLQTGSPPATTQPQGTTQPPAQPASQGSGPTA. Positions 115 to 144 are enriched in low complexity; it reads QTGSPPATTQPQGTTQPPAQPASQGSGPTA.

Belongs to the TSC-22/Dip/Bun family. In terms of assembly, forms homodimers. Forms a heterodimer with TSC22D4/THG1. Interacts with histone H1-2. Interacts with GNL3.

The protein localises to the cytoplasm. It is found in the nucleus. Functionally, transcriptional repressor. Plays a role in the repression of hematopoietic precursor cell growth. Promotes IL2 deprivation-induced apoptosis in T-lymphocytes, via repression of TSC22D3/GILZ transcription and activation of the caspase cascade. Positively regulates cell death in response to TGFB3 during mammary gland involution. This chain is TSC22 domain family protein 1, found in Bos taurus (Bovine).